Consider the following 455-residue polypeptide: Ammonium transporter Rh type B (455 aa).

The Cytoplasmic portion of the chain corresponds to 1-13; the sequence is MAWSPRHSAGRRL. The helical transmembrane segment at 14 to 34 threads the bilayer; it reads QLPLLCLLLQGATAILFAVFV. Topologically, residues 35 to 61 are extracellular; the sequence is RYNRETDAALWHWGNHSNADNEFYFRY. Asn-49 carries N-linked (GlcNAc...) asparagine glycosylation. Residues 62–82 traverse the membrane as a helical segment; that stretch reads PSFQDVHAMIFVGFGFLMVFL. Topologically, residues 83 to 86 are cytoplasmic; sequence QRYG. Residues 87 to 107 traverse the membrane as a helical segment; the sequence is FGSVGFTFLLAAFALQWSTLI. Residues 108 to 124 are Extracellular-facing; it reads QGFFHSFRGGYILVGME. A helical transmembrane segment spans residues 125-145; sequence SMINADFCAGAVLISFGAVLG. Over 146–151 the chain is Cytoplasmic; that stretch reads KTGPVQ. The helical transmembrane segment at 152-172 threads the bilayer; it reads LLLMALLEVVLFGLNEFVLLS. Residues 173–179 lie on the Extracellular side of the membrane; that stretch reads LLEVKDA. A helical transmembrane segment spans residues 180–200; that stretch reads GGSMTIHTFGAYFGLILSRVL. The Cytoplasmic portion of the chain corresponds to 201–219; it reads YRPQLEKSKHRQGSVYHSD. Residues 220–240 form a helical membrane-spanning segment; the sequence is LFAMIGTIFLWIFWPSFNSAP. At 241-253 the chain is on the extracellular side; it reads TALGDGQHRTALN. Residues 254 to 274 traverse the membrane as a helical segment; it reads TYYSLTASTLSTFALSALVGG. The Cytoplasmic portion of the chain corresponds to 275–277; that stretch reads DGR. The helical transmembrane segment at 278–298 threads the bilayer; that stretch reads LDMVHVQNAALAGGVVVGTSA. Residue Glu-299 is a topological domain, extracellular. Residues 300 to 320 form a helical membrane-spanning segment; that stretch reads MMLTPFGALAAGFLAGAISTL. At 321 to 343 the chain is on the cytoplasmic side; it reads GYKFVTPILESKLKVQDTCGVHN. Residues 344–364 form a helical membrane-spanning segment; the sequence is LHGMPGVLGALLGGLVAGLAT. The Extracellular segment spans residues 365 to 393; sequence REAYGDGLESVFPLIAEGQRSATSQAMHQ. A helical transmembrane segment spans residues 394 to 414; it reads LFGLFVTLTFASVGGGLGGLL. The Cytoplasmic segment spans residues 415 to 455; that stretch reads LRLPILDSPPDSQCYEDQIYWEVPGEHEHLAQGSEETETQA. Residues 416–424 form an interaction with ANK3 region; it reads RLPILDSPP. The Basolateral sorting signal signature appears at 429–432; the sequence is YEDQ.

This sequence belongs to the ammonium transporter (TC 2.A.49) family. Rh subfamily. Interacts (via C-terminus) with ANK2 and ANK3; required for targeting to the basolateral membrane. In terms of processing, N-glycosylated.

The protein localises to the cell membrane. It localises to the basolateral cell membrane. It carries out the reaction NH4(+)(in) = NH4(+)(out). It catalyses the reaction methylamine(out) = methylamine(in). The enzyme catalyses CO2(out) = CO2(in). In terms of biological role, ammonium transporter involved in the maintenance of acid-base homeostasis. Transports ammonium and its related derivative methylammonium across the basolateral plasma membrane of epithelial cells likely contributing to renal transepithelial ammonia transport and ammonia metabolism. May transport either NH4(+) or NH3 ammonia species predominantly mediating an electrogenic NH4(+) transport. May act as a CO2 channel providing for renal acid secretion. The chain is Ammonium transporter Rh type B (RHBG) from Bos taurus (Bovine).